Consider the following 506-residue polypeptide: Anaerobic nitric oxide reductase transcription regulator NorR (506 aa).

Asp57 bears the 4-aspartylphosphate mark. The Sigma-54 factor interaction domain occupies 187–416 (MIGLSPAMTQ…LEHAIHRAVV (230 aa)). ATP-binding positions include 215–222 (GETGTGKE) and 278–287 (ADNGTLFLDE). Positions 481-500 (WAASARALETDVANLHRLAK) form a DNA-binding region, H-T-H motif.

It participates in nitrogen metabolism; nitric oxide reduction. In terms of biological role, required for the expression of anaerobic nitric oxide (NO) reductase, acts as a transcriptional activator for at least the norVW operon. Activation also requires sigma-54. This is Anaerobic nitric oxide reductase transcription regulator NorR from Salmonella choleraesuis (strain SC-B67).